The following is a 487-amino-acid chain: Glycogen synthase (487 aa).

Lys-20 provides a ligand contact to ADP-alpha-D-glucose.

The protein belongs to the glycosyltransferase 1 family. Bacterial/plant glycogen synthase subfamily.

It carries out the reaction [(1-&gt;4)-alpha-D-glucosyl](n) + ADP-alpha-D-glucose = [(1-&gt;4)-alpha-D-glucosyl](n+1) + ADP + H(+). It participates in glycan biosynthesis; glycogen biosynthesis. Its function is as follows. Synthesizes alpha-1,4-glucan chains using ADP-glucose. In Aliivibrio fischeri (strain MJ11) (Vibrio fischeri), this protein is Glycogen synthase.